The following is a 195-amino-acid chain: Recombination protein RecR (195 aa).

The C4-type zinc-finger motif lies at Cys54 to Cys69. Residues Ala77 to Pro172 enclose the Toprim domain.

It belongs to the RecR family.

Its function is as follows. May play a role in DNA repair. It seems to be involved in an RecBC-independent recombinational process of DNA repair. It may act with RecF and RecO. This Treponema denticola (strain ATCC 35405 / DSM 14222 / CIP 103919 / JCM 8153 / KCTC 15104) protein is Recombination protein RecR.